A 57-amino-acid polypeptide reads, in one-letter code: UPF0391 membrane protein RPC_2356 (57 aa).

2 helical membrane passes run Trp6–Ser26 and Ile35–Phe55.

It belongs to the UPF0391 family.

Its subcellular location is the cell membrane. This is UPF0391 membrane protein RPC_2356 from Rhodopseudomonas palustris (strain BisB18).